Reading from the N-terminus, the 226-residue chain is MDAIQEVKRIIPEVQKYVNQRMEEFERLGREGWTHFDFRPFLDIDYDAGLFSELSFCILTANSSATLGIKIQAHLGEEGFLNKTKEELEEVFRKFGHRYAGQRAERIVEAREKFPKVKSLIEKEKNSKVIRELLADPKSPYKIKGFGYKEASHFLRNIGFKDLAIIDRHISRFLMEKGLLRQVKSITPKVYLEAEKALESLAKELGLSLGELDLYIFYIKTKKVLK.

Residues Lys-149 and Asp-167 contribute to the active site.

It belongs to the type-2 OGG1 family.

It catalyses the reaction 2'-deoxyribonucleotide-(2'-deoxyribose 5'-phosphate)-2'-deoxyribonucleotide-DNA = a 3'-end 2'-deoxyribonucleotide-(2,3-dehydro-2,3-deoxyribose 5'-phosphate)-DNA + a 5'-end 5'-phospho-2'-deoxyribonucleoside-DNA + H(+). Its function is as follows. Catalyzes the excision of an oxidatively damaged form of guanine (7,8-dihydro-8-oxoguanine = 8-oxoG) from DNA. Also cleaves the DNA backbone at apurinic/apyrimidinic sites (AP sites). This Aquifex aeolicus (strain VF5) protein is 8-oxoguanine DNA glycosylase/AP lyase.